Consider the following 82-residue polypeptide: Consomatin Ro2 (82 aa).

The signal sequence occupies residues 1 to 22 (MQTAYWLMVMMMVWITAPLYEG). The propeptide occupies 23 to 57 (GKPNDVIRGLVPDDLTPQFILRSLISRRRSDKDVR). Residues C62 and C68 are joined by a disulfide bond. W64 carries the D-tryptophan modification. 4-hydroxyproline is present on residues P69 and P70. The propeptide occupies 72–82 (LWRRHDRKGKD).

Belongs to the conotoxin C superfamily. Consomatin family. As to expression, expressed by the venom duct.

The protein localises to the secreted. Moderately activates human somatostatin receptors (SSTR) with a preferential activation of SSTR1 and SSTR4. In vivo, does not cause behavioral changes in mice within a few minutes of intracranial injection, but causes a progressive loss of movement thereafter. Four to five hours after injection, mice recover, even with the highest dose tested. Shows antinociception and antihyperalgesia activities in two mouse models of acute pain, most probably by acting outside the central nervous system. The protein is Consomatin Ro2 of Conus rolani (Cone snail).